Consider the following 211-residue polypeptide: Claudin-1 (211 aa).

Over 1 to 7 (MANAGLQ) the chain is Cytoplasmic. Residues 8–28 (LLGFILASLGWIGSIVSTALP) traverse the membrane as a helical segment. Over 29-81 (QWKIYSYAGDNIVTAQAIYEGLWMSCVSQSTGQIQCKVFDSLLNLNSTLQATR) the chain is Extracellular. The cysteines at positions 54 and 64 are disulfide-linked. A helical transmembrane segment spans residues 82 to 102 (ALMVIGILLGLIAIFVSTIGM). The Cytoplasmic segment spans residues 103 to 115 (KCMRCLEDDEVQK). Residues 116-136 (MWMAVIGGIIFVISGLATLVA) form a helical membrane-spanning segment. Over 137–163 (TAWYGNRIVQEFYDPMTPVNARYEFGQ) the chain is Extracellular. The helical transmembrane segment at 164–184 (ALFTGWAAASLCLLGGALLSC) threads the bilayer. Topologically, residues 185–211 (SCPRKTTSYPTPRPYPKPTPSSGKDYV) are cytoplasmic. Residues 190-211 (TTSYPTPRPYPKPTPSSGKDYV) are disordered. The tract at residues 210-211 (YV) is interactions with TJP1, TJP2, TJP3 and PATJ.

This sequence belongs to the claudin family. In terms of assembly, can form homo- and heteropolymers with other CLDN. Homopolymers interact with CLDN3, but not CLDN2, homopolymers. Directly interacts with TJP1/ZO-1, TJP2/ZO-2 and TJP3/ZO-3. Interacts with MPDZ and PATJ. Interacts with OCLN, CD81, CLDN4, CLDN6 and CLDN9. Detected in epididymis (at protein level). Detected in testis and epididymis.

It is found in the cell junction. Its subcellular location is the tight junction. The protein resides in the cell membrane. It localises to the basolateral cell membrane. In terms of biological role, claudins function as major constituents of the tight junction complexes that regulate the permeability of epithelia. While some claudin family members play essential roles in the formation of impermeable barriers, others mediate the permeability to ions and small molecules. Often, several claudin family members are coexpressed and interact with each other, and this determines the overall permeability. CLDN1 is required to prevent the paracellular diffusion of small molecules through tight junctions in the epidermis and is required for the normal barrier function of the skin. Required for normal water homeostasis and to prevent excessive water loss through the skin, probably via an indirect effect on the expression levels of other proteins, since CLDN1 itself seems to be dispensable for water barrier formation in keratinocyte tight junctions. The polypeptide is Claudin-1 (Cldn1) (Rattus norvegicus (Rat)).